A 1392-amino-acid chain; its full sequence is Ankyrin repeat domain-containing protein 30B (1392 aa).

The segment at 1–21 (MKRLLAAAGKGVRGPEPPNPF) is disordered. ANK repeat units follow at residues 72–101 (KKRTALHWACVNGHAEVVTFLVDRKCQLNV), 105–134 (EGRTPLMKALQCEREACANILIDAGADLNY), 138–167 (YGNTALHYAVYSENLLMVATLLSYGAVIEV), 171–200 (ASLTPLLLAIQKRSKQTVEFLLTKNANANA), and 204–233 (SKCTALMLAICEGSSEIVGMLLQQNVDVFA). 6 disordered regions span residues 265 to 292 (PKNPQNTNPEGTSTGTPDEAAPLAERTP), 558 to 587 (AQMFPSESKQKDDEENSWDSESPCETVSQK), 636 to 656 (DRETFKAESPDKDGLLKPTCG), 671 to 690 (RETLKAESPDNDGLLKPTCG), 830 to 877 (KEGA…SDSE), and 904 to 926 (GKIEESPEKPSHFEPATEMQNSV). 2 stretches are compositionally biased toward polar residues: residues 267–280 (NPQNTNPEGTSTGT) and 576–586 (DSESPCETVSQ). Basic and acidic residues predominate over residues 636-650 (DRETFKAESPDKDGL). Residues 830–840 (KEGATKTVTGQ) are compositionally biased toward polar residues. 2 stretches are compositionally biased toward basic and acidic residues: residues 864 to 874 (LGRKEDTKSTS) and 904 to 915 (GKIEESPEKPSH). 2 coiled-coil regions span residues 960 to 1168 (RELK…KQDK) and 1270 to 1318 (ETQC…QQLV).

Expressed in brain, breast and testis.

The protein is Ankyrin repeat domain-containing protein 30B (ANKRD30B) of Homo sapiens (Human).